Here is a 508-residue protein sequence, read N- to C-terminus: MAMDWLGSIVSINCGDSLGVYQGRVSAVDQVSQTISLTRPFHNGVKCLVPEVTFRAGDITELKILEIPGPGDNQQVGDLHQTELGPSGVGYQMSISQNGTGKVVKKPASSSSAPQSIPKRTDVKSQDVAISPQQQQCSKSYVDRHMESLSQSKSFRRRHNSWSSSSRHPNQATPKKSGLKNGQMKNKDDECFGDDIEELPDTDFDFEGNLALFDKAAVFEEIDTYERRSGSRSRGVPNERPARYRHDENILESEPIVYRRITVPHSVSKEFCTDSGLVVPSVSYELHKKLLSVAEKHGLTLERRLEMTGVCASQMALTLLGGPNRLNPKNVHQRPTVALLCGPHVKGAQGISCGRHLANHDVQVILFLPNFVKMLESITNELSLFSKTQGQQVSSLRDLPASPVDLVINCLDCPENAFLRDQPWYKAAVAWANQNRAPVLSIDPPVHEVEQGIDAKWSLALGLPLPLGEHAGRVYLCDIGIPQQVFQEVGINYHSPFGCKFVIPLHSA.

The Sm domain maps to 1–68; the sequence is MAMDWLGSIV…ITELKILEIP (68 aa). A required for P-body targeting and interaction with DCP1A region spans residues 1–79; sequence MAMDWLGSIV…PGDNQQVGDL (79 aa). The interval 98 to 194 is disordered; it reads NGTGKVVKKP…KNKDDECFGD (97 aa). Phosphoserine is present on residues S131, S138, S140, and S161. The tract at residues 191-296 is required for interaction with DDX6; that stretch reads CFGDDIEELP…HKKLLSVAEK (106 aa). The DFDF domain occupies 192–228; sequence FGDDIEELPDTDFDFEGNLALFDKAAVFEEIDTYERR. The YjeF N-terminal domain occupies 283–487; that stretch reads SYELHKKLLS…DIGIPQQVFQ (205 aa).

The protein belongs to the EDC3 family. In terms of assembly, homodimer (via YjeF N-terminal domain). Forms a complex with DCP1A, DCP2, DDX6 and EDC4/HEDLS, within this complex directly interacts with DCP1A and DDX6. Interacts with ZFP36.

Its subcellular location is the cytoplasm. It localises to the P-body. Its function is as follows. Binds single-stranded RNA. Involved in the process of mRNA degradation and in the positive regulation of mRNA decapping. The sequence is that of Enhancer of mRNA-decapping protein 3 (Edc3) from Mus musculus (Mouse).